The chain runs to 535 residues: UDP-N-acetylmuramoyl-L-alanyl-D-glutamate--2,6-diaminopimelate ligase (535 aa).

Residue L67 coordinates UDP-N-acetyl-alpha-D-muramoyl-L-alanyl-D-glutamate. 153–159 (GTSGKTT) serves as a coordination point for ATP. Residues 195–196 (TT), S222, and R230 each bind UDP-N-acetyl-alpha-D-muramoyl-L-alanyl-D-glutamate. Position 262 is an N6-carboxylysine (K262). Residues R424, 448–451 (DNPR), G502, and E506 contribute to the meso-2,6-diaminopimelate site. A Meso-diaminopimelate recognition motif motif is present at residues 448–451 (DNPR).

The protein belongs to the MurCDEF family. MurE subfamily. Requires Mg(2+) as cofactor. In terms of processing, carboxylation is probably crucial for Mg(2+) binding and, consequently, for the gamma-phosphate positioning of ATP.

It localises to the cytoplasm. It catalyses the reaction UDP-N-acetyl-alpha-D-muramoyl-L-alanyl-D-glutamate + meso-2,6-diaminopimelate + ATP = UDP-N-acetyl-alpha-D-muramoyl-L-alanyl-gamma-D-glutamyl-meso-2,6-diaminopimelate + ADP + phosphate + H(+). It participates in cell wall biogenesis; peptidoglycan biosynthesis. Functionally, catalyzes the addition of meso-diaminopimelic acid to the nucleotide precursor UDP-N-acetylmuramoyl-L-alanyl-D-glutamate (UMAG) in the biosynthesis of bacterial cell-wall peptidoglycan. The chain is UDP-N-acetylmuramoyl-L-alanyl-D-glutamate--2,6-diaminopimelate ligase from Mycobacterium bovis (strain ATCC BAA-935 / AF2122/97).